The sequence spans 284 residues: Bifunctional protein FolD (284 aa).

NADP(+) contacts are provided by residues 165-167, S190, and V231; that span reads GRS.

This sequence belongs to the tetrahydrofolate dehydrogenase/cyclohydrolase family. In terms of assembly, homodimer.

The catalysed reaction is (6R)-5,10-methylene-5,6,7,8-tetrahydrofolate + NADP(+) = (6R)-5,10-methenyltetrahydrofolate + NADPH. It carries out the reaction (6R)-5,10-methenyltetrahydrofolate + H2O = (6R)-10-formyltetrahydrofolate + H(+). Its pathway is one-carbon metabolism; tetrahydrofolate interconversion. In terms of biological role, catalyzes the oxidation of 5,10-methylenetetrahydrofolate to 5,10-methenyltetrahydrofolate and then the hydrolysis of 5,10-methenyltetrahydrofolate to 10-formyltetrahydrofolate. This chain is Bifunctional protein FolD, found in Bacillus licheniformis (strain ATCC 14580 / DSM 13 / JCM 2505 / CCUG 7422 / NBRC 12200 / NCIMB 9375 / NCTC 10341 / NRRL NRS-1264 / Gibson 46).